The following is a 191-amino-acid chain: Peptidyl-tRNA hydrolase (191 aa).

Tyr-14 contributes to the tRNA binding site. His-19 serves as the catalytic Proton acceptor. Positions 64, 66, and 112 each coordinate tRNA.

It belongs to the PTH family. In terms of assembly, monomer.

The protein localises to the cytoplasm. It catalyses the reaction an N-acyl-L-alpha-aminoacyl-tRNA + H2O = an N-acyl-L-amino acid + a tRNA + H(+). Hydrolyzes ribosome-free peptidyl-tRNAs (with 1 or more amino acids incorporated), which drop off the ribosome during protein synthesis, or as a result of ribosome stalling. In terms of biological role, catalyzes the release of premature peptidyl moieties from peptidyl-tRNA molecules trapped in stalled 50S ribosomal subunits, and thus maintains levels of free tRNAs and 50S ribosomes. In Syntrophotalea carbinolica (strain DSM 2380 / NBRC 103641 / GraBd1) (Pelobacter carbinolicus), this protein is Peptidyl-tRNA hydrolase.